Consider the following 138-residue polypeptide: Cysteine desulfuration protein SufE (138 aa).

Catalysis depends on Cys-51, which acts as the Cysteine persulfide intermediate.

This sequence belongs to the SufE family. In terms of assembly, homodimer. Interacts with SufS.

Its subcellular location is the cytoplasm. Its pathway is cofactor biosynthesis; iron-sulfur cluster biosynthesis. Functionally, participates in cysteine desulfuration mediated by SufS. Cysteine desulfuration mobilizes sulfur from L-cysteine to yield L-alanine and constitutes an essential step in sulfur metabolism for biosynthesis of a variety of sulfur-containing biomolecules. Functions as a sulfur acceptor for SufS, by mediating the direct transfer of the sulfur atom from the S-sulfanylcysteine of SufS, an intermediate product of cysteine desulfuration process. The chain is Cysteine desulfuration protein SufE from Photorhabdus laumondii subsp. laumondii (strain DSM 15139 / CIP 105565 / TT01) (Photorhabdus luminescens subsp. laumondii).